The chain runs to 146 residues: Large ribosomal subunit protein uL15 (146 aa).

Positions 1–54 are disordered; sequence MTLRLNELAPAEGAKRDNRRLGRGIGSGVGKTGGRGVKGQKSRKSGGVRPGFEG. A compositionally biased stretch (gly residues) spans 23 to 37; it reads RGIGSGVGKTGGRGV.

It belongs to the universal ribosomal protein uL15 family. Part of the 50S ribosomal subunit.

Its function is as follows. Binds to the 23S rRNA. The protein is Large ribosomal subunit protein uL15 of Acinetobacter baylyi (strain ATCC 33305 / BD413 / ADP1).